Reading from the N-terminus, the 78-residue chain is Acyl carrier protein (78 aa).

Residues 4–78 form the Carrier domain; that stretch reads AEIKDKVYDI…QQAIDYIVKK (75 aa). Ser-39 is subject to O-(pantetheine 4'-phosphoryl)serine.

It belongs to the acyl carrier protein (ACP) family. Post-translationally, 4'-phosphopantetheine is transferred from CoA to a specific serine of apo-ACP by AcpS. This modification is essential for activity because fatty acids are bound in thioester linkage to the sulfhydryl of the prosthetic group.

The protein localises to the cytoplasm. It functions in the pathway lipid metabolism; fatty acid biosynthesis. Carrier of the growing fatty acid chain in fatty acid biosynthesis. In Chlorobium phaeovibrioides (strain DSM 265 / 1930) (Prosthecochloris vibrioformis (strain DSM 265)), this protein is Acyl carrier protein.